Consider the following 316-residue polypeptide: Glutathione synthetase (316 aa).

An ATP-grasp domain is found at 123 to 309 (NEKISTLSFK…ISGILLDSIE (187 aa)). Residue 149–206 (FQEKFGDIILKPINKMGGDSVFYVKKNDPNVSVIIDQLTNYGNSFCLIQEYIKEILNG) coordinates ATP. Residues glutamate 280 and asparagine 282 each contribute to the Mg(2+) site.

It belongs to the prokaryotic GSH synthase family. Mg(2+) serves as cofactor. Mn(2+) is required as a cofactor.

The catalysed reaction is gamma-L-glutamyl-L-cysteine + glycine + ATP = glutathione + ADP + phosphate + H(+). It participates in sulfur metabolism; glutathione biosynthesis; glutathione from L-cysteine and L-glutamate: step 2/2. This chain is Glutathione synthetase, found in Wigglesworthia glossinidia brevipalpis.